A 282-amino-acid chain; its full sequence is Glutamyl endopeptidase (282 aa).

Positions 1–27 (MKKRFLSICTMTIAALATTTMVNTSYA) are cleaved as a signal peptide. Residues 28-66 (KTDTESHNHSSLGTENKNVLDINSSSHNIKPSQNKSYPS) constitute a propeptide that is removed on maturation. Active-site charge relay system residues include histidine 117, aspartate 159, and serine 235.

The protein belongs to the peptidase S1B family.

Its subcellular location is the secreted. It carries out the reaction Preferential cleavage: Glu-|-Xaa, Asp-|-Xaa.. In terms of biological role, exhibits a significant hydrolytic activity for the carbonyl side of glutamic acid. Shows activity toward human fibronectin and type 1 collagen. This chain is Glutamyl endopeptidase (gseA), found in Staphylococcus epidermidis (strain ATCC 35984 / DSM 28319 / BCRC 17069 / CCUG 31568 / BM 3577 / RP62A).